Consider the following 380-residue polypeptide: Cell division protein FtsZ (380 aa).

GTP contacts are provided by residues 27–31 (GAGNN), 119–121 (GTG), Glu-150, and Asn-189.

This sequence belongs to the FtsZ family. As to quaternary structure, homodimer. Polymerizes to form a dynamic ring structure in a strictly GTP-dependent manner. Interacts directly with several other division proteins.

The protein resides in the cytoplasm. Functionally, essential cell division protein that forms a contractile ring structure (Z ring) at the future cell division site. The regulation of the ring assembly controls the timing and the location of cell division. One of the functions of the FtsZ ring is to recruit other cell division proteins to the septum to produce a new cell wall between the dividing cells. Binds GTP and shows GTPase activity. The polypeptide is Cell division protein FtsZ (Mycoplasma pneumoniae (strain ATCC 29342 / M129 / Subtype 1) (Mycoplasmoides pneumoniae)).